We begin with the raw amino-acid sequence, 248 residues long: Triosephosphate isomerase (248 aa).

9 to 11 (NWK) provides a ligand contact to substrate. His-94 (electrophile) is an active-site residue. The Proton acceptor role is filled by Glu-166. Residues Gly-172, Ser-212, and 233-234 (GG) contribute to the substrate site.

This sequence belongs to the triosephosphate isomerase family. As to quaternary structure, homodimer.

Its subcellular location is the cytoplasm. The enzyme catalyses D-glyceraldehyde 3-phosphate = dihydroxyacetone phosphate. The protein operates within carbohydrate biosynthesis; gluconeogenesis. It functions in the pathway carbohydrate degradation; glycolysis; D-glyceraldehyde 3-phosphate from glycerone phosphate: step 1/1. Functionally, involved in the gluconeogenesis. Catalyzes stereospecifically the conversion of dihydroxyacetone phosphate (DHAP) to D-glyceraldehyde-3-phosphate (G3P). The polypeptide is Triosephosphate isomerase (Clostridium botulinum (strain Langeland / NCTC 10281 / Type F)).